Consider the following 147-residue polypeptide: MAKEVAGLIKLQIKGGAANPSPPVGPALGSKGINIMEFCKQFNARTQDKAGKILPVIITYYADKSFDFVIKTPPVAIQLLEVAKVKSGSAEPNRKKVAEITWEQVRTIAQDKMVDLNCFTVEAAMRMVAGTARSMGIAVKGEFPVNN.

Belongs to the universal ribosomal protein uL11 family. Part of the ribosomal stalk of the 50S ribosomal subunit. Interacts with L10 and the large rRNA to form the base of the stalk. L10 forms an elongated spine to which L12 dimers bind in a sequential fashion forming a multimeric L10(L12)X complex. One or more lysine residues are methylated.

Functionally, forms part of the ribosomal stalk which helps the ribosome interact with GTP-bound translation factors. In Bacteroides fragilis (strain ATCC 25285 / DSM 2151 / CCUG 4856 / JCM 11019 / LMG 10263 / NCTC 9343 / Onslow / VPI 2553 / EN-2), this protein is Large ribosomal subunit protein uL11.